We begin with the raw amino-acid sequence, 384 residues long: Galactokinase (384 aa).

34–37 (EHTD) serves as a coordination point for substrate. ATP is bound at residue 123 to 129 (SSGLSSS). Residues Ser129 and Glu161 each coordinate Mg(2+). Asp173 functions as the Proton acceptor in the catalytic mechanism. Tyr222 is a binding site for substrate.

The protein belongs to the GHMP kinase family. GalK subfamily.

It localises to the cytoplasm. The catalysed reaction is alpha-D-galactose + ATP = alpha-D-galactose 1-phosphate + ADP + H(+). It participates in carbohydrate metabolism; galactose metabolism. Functionally, catalyzes the transfer of the gamma-phosphate of ATP to D-galactose to form alpha-D-galactose-1-phosphate (Gal-1-P). The sequence is that of Galactokinase from Haemophilus influenzae (strain ATCC 51907 / DSM 11121 / KW20 / Rd).